The sequence spans 304 residues: D-alanine--D-alanine ligase (304 aa).

Residues 103-301 (KQVWLALGLP…FDDLVWRILE (199 aa)) enclose the ATP-grasp domain. Position 132-187 (132-187 (VEMLGFPVIIKPAKEGSSVGVSRVFALEHLEEAVALAARYEGELLMEQLIEGDELT)) interacts with ATP. Positions 254, 268, and 270 each coordinate Mg(2+).

This sequence belongs to the D-alanine--D-alanine ligase family. Requires Mg(2+) as cofactor. Mn(2+) is required as a cofactor.

It localises to the cytoplasm. It carries out the reaction 2 D-alanine + ATP = D-alanyl-D-alanine + ADP + phosphate + H(+). The protein operates within cell wall biogenesis; peptidoglycan biosynthesis. Functionally, cell wall formation. The polypeptide is D-alanine--D-alanine ligase (Xylella fastidiosa (strain Temecula1 / ATCC 700964)).